Reading from the N-terminus, the 753-residue chain is Polyribonucleotide nucleotidyltransferase (753 aa).

Residues aspartate 543 and aspartate 549 each coordinate Mg(2+). Residues 609 to 668 (PRITTVKIPVAKIGELIGPKGKNINALTEETGANISIEDDGTVFISAADGASAEAAIEKI) form the KH domain. An S1 motif domain is found at 680–749 (GERFLGTVVK…NRGKISLVPV (70 aa)).

This sequence belongs to the polyribonucleotide nucleotidyltransferase family. Requires Mg(2+) as cofactor.

The protein localises to the cytoplasm. The enzyme catalyses RNA(n+1) + phosphate = RNA(n) + a ribonucleoside 5'-diphosphate. Involved in mRNA degradation. Catalyzes the phosphorolysis of single-stranded polyribonucleotides processively in the 3'- to 5'-direction. This Corynebacterium glutamicum (strain R) protein is Polyribonucleotide nucleotidyltransferase.